The sequence spans 165 residues: Interferon gamma (165 aa).

The N-terminal stretch at 1-23 (MKYTSYILAFQLCIVLGSLGCYC) is a signal peptide. Position 24 is a pyrrolidone carboxylic acid (Gln24). Asn48 and Asn120 each carry an N-linked (GlcNAc...) asparagine glycan.

This sequence belongs to the type II (or gamma) interferon family. Homodimer. Interacts with IFNGR1 (via extracellular domain); this interaction promotes IFNGR1 dimerization.

It is found in the secreted. Functionally, type II interferon produced by immune cells such as T-cells and NK cells that plays crucial roles in antimicrobial, antiviral, and antitumor responses by activating effector immune cells and enhancing antigen presentation. Primarily signals through the JAK-STAT pathway after interaction with its receptor IFNGR1 to affect gene regulation. Upon IFNG binding, IFNGR1 intracellular domain opens out to allow association of downstream signaling components JAK2, JAK1 and STAT1, leading to STAT1 activation, nuclear translocation and transcription of IFNG-regulated genes. Many of the induced genes are transcription factors such as IRF1 that are able to further drive regulation of a next wave of transcription. Plays a role in class I antigen presentation pathway by inducing a replacement of catalytic proteasome subunits with immunoproteasome subunits. In turn, increases the quantity, quality, and repertoire of peptides for class I MHC loading. Increases the efficiency of peptide generation also by inducing the expression of activator PA28 that associates with the proteasome and alters its proteolytic cleavage preference. Up-regulates as well MHC II complexes on the cell surface by promoting expression of several key molecules such as cathepsins B/CTSB, H/CTSH, and L/CTSL. Participates in the regulation of hematopoietic stem cells during development and under homeostatic conditions by affecting their development, quiescence, and differentiation. The chain is Interferon gamma (IFNG) from Papio anubis (Olive baboon).